A 357-amino-acid chain; its full sequence is Peptide chain release factor 1 (357 aa).

Q232 carries the N5-methylglutamine modification.

It belongs to the prokaryotic/mitochondrial release factor family. Post-translationally, methylated by PrmC. Methylation increases the termination efficiency of RF1.

It is found in the cytoplasm. Its function is as follows. Peptide chain release factor 1 directs the termination of translation in response to the peptide chain termination codons UAG and UAA. The polypeptide is Peptide chain release factor 1 (Maridesulfovibrio salexigens (strain ATCC 14822 / DSM 2638 / NCIMB 8403 / VKM B-1763) (Desulfovibrio salexigens)).